A 38-amino-acid chain; its full sequence is Large ribosomal subunit protein bL36 (38 aa).

The protein belongs to the bacterial ribosomal protein bL36 family.

The polypeptide is Large ribosomal subunit protein bL36 (Pseudothermotoga lettingae (strain ATCC BAA-301 / DSM 14385 / NBRC 107922 / TMO) (Thermotoga lettingae)).